Here is a 169-residue protein sequence, read N- to C-terminus: Ribosomal RNA large subunit methyltransferase H (169 aa).

Residues leucine 85, glycine 117, and 136–141 (LGELTW) contribute to the S-adenosyl-L-methionine site.

It belongs to the RNA methyltransferase RlmH family. Homodimer.

The protein resides in the cytoplasm. It carries out the reaction pseudouridine(1915) in 23S rRNA + S-adenosyl-L-methionine = N(3)-methylpseudouridine(1915) in 23S rRNA + S-adenosyl-L-homocysteine + H(+). Specifically methylates the pseudouridine at position 1915 (m3Psi1915) in 23S rRNA. This is Ribosomal RNA large subunit methyltransferase H from Brucella ovis (strain ATCC 25840 / 63/290 / NCTC 10512).